Here is a 634-residue protein sequence, read N- to C-terminus: Chaperone protein HtpG (634 aa).

Residues 1–342 (MTVDTDKQTL…SADLSLNVSR (342 aa)) are a; substrate-binding. A b region spans residues 343-559 (EILQSGPVVD…QGDLGLQMRQ (217 aa)). Residues 560–634 (LLEASGQAVP…LNKLLLELSA (75 aa)) form a c region.

It belongs to the heat shock protein 90 family. In terms of assembly, homodimer.

Its subcellular location is the cytoplasm. Its function is as follows. Molecular chaperone. Has ATPase activity. The sequence is that of Chaperone protein HtpG from Xanthomonas campestris pv. campestris (strain ATCC 33913 / DSM 3586 / NCPPB 528 / LMG 568 / P 25).